Reading from the N-terminus, the 174-residue chain is Actin-related protein 2/3 complex subunit 3 (174 aa).

Belongs to the ARPC3 family. Component of the Arp2/3 complex composed of arp2, act2, arc1/p41-ARC, arc2/p34-ARC, arc3/p21-ARC, arc4/p20-ARC and arc5/p16-ARC.

The protein localises to the cytoplasm. Its subcellular location is the cytoskeleton. It is found in the actin patch. Functionally, functions as a component of the Arp2/3 complex which is involved in regulation of actin polymerization and together with an activating nucleation-promoting factor (NPF) mediates the formation of branched actin networks. The protein is Actin-related protein 2/3 complex subunit 3 (arc3) of Schizosaccharomyces pombe (strain 972 / ATCC 24843) (Fission yeast).